The following is a 110-amino-acid chain: Large ribosomal subunit protein uL23c (110 aa).

This sequence belongs to the universal ribosomal protein uL23 family. Part of the 50S ribosomal subunit.

The protein localises to the plastid. The protein resides in the chloroplast. Its function is as follows. Binds to 23S rRNA. The polypeptide is Large ribosomal subunit protein uL23c (rpl23) (Porphyra purpurea (Red seaweed)).